A 902-amino-acid polypeptide reads, in one-letter code: Protein NrfI (902 aa).

Helical transmembrane passes span 9–29 (YITL…ATFI), 75–95 (FLFH…RYLG), 300–320 (VTYL…LDPT), 335–355 (LSLL…YAQS), 602–622 (LVLG…PPLA), 659–679 (DTYE…LLFF), 731–751 (SYGF…LFIL), 772–792 (VSLI…GIWA), 832–852 (YLFS…YFGV), and 868–888 (LPIP…SLIA).

The protein in the C-terminal section; belongs to the CcmF/CycK/Ccl1/NrfE/CcsA family.

It localises to the cell membrane. May play a role in cytochrome c biogenesis and may be required for maturation of the NrfA protein. In Wolinella succinogenes (strain ATCC 29543 / DSM 1740 / CCUG 13145 / JCM 31913 / LMG 7466 / NCTC 11488 / FDC 602W) (Vibrio succinogenes), this protein is Protein NrfI (nrfI).